A 394-amino-acid chain; its full sequence is Aspergillopepsin-1 (394 aa).

An N-terminal signal peptide occupies residues 1 to 20 (MVVFSKTAALVLGLSSAVSA). A propeptide spans 21-69 (APAPTRKGFTINQIARPANKTRTINLPGMYARSLAKFGGTVPQSVKEAA) (activation peptide). The Peptidase A1 domain occupies 85–391 (YLTPVTVGKS…NSEGPKLGFA (307 aa)). Residues Asp101 and Asp283 contribute to the active site. Cys319 and Cys354 are disulfide-bonded.

This sequence belongs to the peptidase A1 family. As to quaternary structure, monomer.

Its subcellular location is the secreted. It catalyses the reaction Hydrolysis of proteins with broad specificity. Generally favors hydrophobic residues in P1 and P1', but also accepts Lys in P1, which leads to activation of trypsinogen. Does not clot milk.. Functionally, secreted aspartic endopeptidase that allows assimilation of proteinaceous substrates. The scissile peptide bond is attacked by a nucleophilic water molecule activated by two aspartic residues in the active site. Shows a broad primary substrate specificity. Favors hydrophobic residues at the P1 and P1' positions, but also accepts a lysine residue in the P1 position, leading to the activation of trypsinogen and chymotrypsinogen A. This Aspergillus niger (strain ATCC MYA-4892 / CBS 513.88 / FGSC A1513) protein is Aspergillopepsin-1 (pepA).